Consider the following 211-residue polypeptide: Ras-related protein RABB1c (211 aa).

At S2 the chain carries N-acetylserine. G13 to C21 contacts GTP. The Effector region signature appears at H35–F43. GTP-binding positions include D61–Q65, N119–D122, and S149–K151. Residues C209 and C210 are each lipidated (S-geranylgeranyl cysteine).

This sequence belongs to the small GTPase superfamily. Rab family.

It localises to the cell membrane. Functionally, intracellular vesicle trafficking and protein transport. The sequence is that of Ras-related protein RABB1c (RABB1C) from Arabidopsis thaliana (Mouse-ear cress).